The sequence spans 78 residues: Acyl carrier protein (78 aa).

The region spanning 1–76 (MALFEDIQAV…DVVKYIEDNK (76 aa)) is the Carrier domain. S36 bears the O-(pantetheine 4'-phosphoryl)serine mark.

It belongs to the acyl carrier protein (ACP) family. 4'-phosphopantetheine is transferred from CoA to a specific serine of apo-ACP by AcpS. This modification is essential for activity because fatty acids are bound in thioester linkage to the sulfhydryl of the prosthetic group.

The protein resides in the cytoplasm. Its pathway is lipid metabolism; fatty acid biosynthesis. Functionally, carrier of the growing fatty acid chain in fatty acid biosynthesis. The sequence is that of Acyl carrier protein from Helicobacter pylori (strain J99 / ATCC 700824) (Campylobacter pylori J99).